Here is a 119-residue protein sequence, read N- to C-terminus: Large ribosomal subunit protein uL14 (119 aa).

It belongs to the universal ribosomal protein uL14 family. In terms of assembly, part of the 50S ribosomal subunit. Forms a cluster with proteins L3 and L19. In the 70S ribosome, L14 and L19 interact and together make contacts with the 16S rRNA in bridges B5 and B8.

In terms of biological role, binds to 23S rRNA. Forms part of two intersubunit bridges in the 70S ribosome. This chain is Large ribosomal subunit protein uL14, found in Wolbachia pipientis subsp. Culex pipiens (strain wPip).